A 279-amino-acid polypeptide reads, in one-letter code: Probable ribosomal RNA small subunit methyltransferase A (279 aa).

Positions 23, 25, 50, 71, 95, and 110 each coordinate S-adenosyl-L-methionine.

This sequence belongs to the class I-like SAM-binding methyltransferase superfamily. rRNA adenine N(6)-methyltransferase family. RsmA subfamily.

The protein resides in the cytoplasm. Its function is as follows. Specifically dimethylates two adjacent adenosines in the loop of a conserved hairpin near the 3'-end of 16S rRNA in the 30S particle. May play a critical role in biogenesis of 30S subunits. The chain is Probable ribosomal RNA small subunit methyltransferase A from Thermococcus kodakarensis (strain ATCC BAA-918 / JCM 12380 / KOD1) (Pyrococcus kodakaraensis (strain KOD1)).